Here is a 493-residue protein sequence, read N- to C-terminus: Probable NADPH:adrenodoxin oxidoreductase, mitochondrial (493 aa).

FAD is bound by residues serine 26, glutamate 48, leucine 56, and isoleucine 100. Residues 177–180 (NGNV), 223–224 (RR), and glutamate 235 each bind NADP(+). Residues tryptophan 407 and 414–416 (GVI) contribute to the FAD site. Glycine 414 lines the NADP(+) pocket.

Belongs to the ferredoxin--NADP reductase type 1 family. Requires FAD as cofactor.

Its subcellular location is the mitochondrion inner membrane. It catalyses the reaction 2 reduced [adrenodoxin] + NADP(+) + H(+) = 2 oxidized [adrenodoxin] + NADPH. Adrenodoxin reductase transfers electrons from NADPH to adrenodoxin, which is involved in heme A biosynthesis and in iron-sulfur cluster assembly. Involved in the electron transfer to heme A synthase COX15, a heme protein that catalyzes the conversion of heme O to heme A. Required for the de novo synthesis of Fe-S clusters on iron sulfur cluster assembly protein ISU1. Involved in electron delivery for Fe-S cluster synthesis. Essential for coenzyme Q biosynthesis. May be involved in the electron transfer required for the hydroxylation reaction performed by COQ6. May play a role in cellular and mitochondrial iron homeostasis. The chain is Probable NADPH:adrenodoxin oxidoreductase, mitochondrial from Saccharomyces cerevisiae (strain ATCC 204508 / S288c) (Baker's yeast).